We begin with the raw amino-acid sequence, 79 residues long: MORN repeat-containing protein 2 (79 aa).

MORN repeat units follow at residues Tyr15–Lys37 and Tyr38–Glu60.

The protein is MORN repeat-containing protein 2 (MORN2) of Bos taurus (Bovine).